The sequence spans 31 residues: Cyclopsychotride-A (31 aa).

The cyclopeptide (Ser-Asn) cross-link spans 1–31; that stretch reads SIPCGESCVFIPCTVTALLGCSCKSKVCYKN. Disulfide bonds link C4-C21, C8-C23, and C13-C28.

Belongs to the cyclotide family. Bracelet subfamily. This is a cyclic peptide.

In terms of biological role, probably participates in a plant defense mechanism. Has antibiotic activity. Inhibits the cytopathic effects and replication of the human immunodeficiency virus. Active against both Gram-positive and Gram-negative bacteria. The sequence is that of Cyclopsychotride-A from Psychotria longipes.